Consider the following 309-residue polypeptide: Ornithine carbamoyltransferase (309 aa).

Carbamoyl phosphate contacts are provided by residues 51–54 (STRT), glutamine 78, arginine 102, and 129–132 (HPCQ). Residues asparagine 161, aspartate 225, and 229–230 (SM) each bind L-ornithine. Residues 265–266 (CL) and arginine 293 each bind carbamoyl phosphate.

Belongs to the aspartate/ornithine carbamoyltransferase superfamily. OTCase family.

It is found in the cytoplasm. It catalyses the reaction carbamoyl phosphate + L-ornithine = L-citrulline + phosphate + H(+). Its pathway is amino-acid biosynthesis; L-arginine biosynthesis; L-arginine from L-ornithine and carbamoyl phosphate: step 1/3. Reversibly catalyzes the transfer of the carbamoyl group from carbamoyl phosphate (CP) to the N(epsilon) atom of ornithine (ORN) to produce L-citrulline. This is Ornithine carbamoyltransferase from Mycolicibacterium paratuberculosis (strain ATCC BAA-968 / K-10) (Mycobacterium paratuberculosis).